The sequence spans 71 residues: Small ribosomal subunit protein bS21 (71 aa).

Belongs to the bacterial ribosomal protein bS21 family.

The polypeptide is Small ribosomal subunit protein bS21 (Dichelobacter nodosus (strain VCS1703A)).